A 69-amino-acid chain; its full sequence is uncharacterized protein (69 aa).

The Cytoplasmic portion of the chain corresponds to 1 to 15 (MLLYIVIIVACIISK). A helical membrane pass occupies residues 16–36 (LVPNEYWAIHLFFIIMIFMVY). Residues 37–69 (MYKKLDIHQKYQFWNYTMSGLSGHNVQVTCKCY) lie on the Extracellular side of the membrane. N-linked (GlcNAc...) asparagine; by host glycosylation is present at Asn51.

The protein belongs to the asfivirus X69R family.

It localises to the host membrane. This is an uncharacterized protein from African swine fever virus (isolate Tick/Malawi/Lil 20-1/1983) (ASFV).